The sequence spans 127 residues: Transcription antitermination protein NusB (127 aa).

It belongs to the NusB family.

In terms of biological role, involved in transcription antitermination. Required for transcription of ribosomal RNA (rRNA) genes. Binds specifically to the boxA antiterminator sequence of the ribosomal RNA (rrn) operons. This is Transcription antitermination protein NusB from Lysinibacillus sphaericus (strain C3-41).